The sequence spans 232 residues: Orotidine 5'-phosphate decarboxylase (232 aa).

Substrate is bound by residues Asp-13, Lys-35, Asp-62–Thr-71, Thr-122, Arg-182, Gln-191, Gly-211, and Arg-212. Catalysis depends on Lys-64, which acts as the Proton donor.

It belongs to the OMP decarboxylase family. Type 1 subfamily. Homodimer.

It carries out the reaction orotidine 5'-phosphate + H(+) = UMP + CO2. The protein operates within pyrimidine metabolism; UMP biosynthesis via de novo pathway; UMP from orotate: step 2/2. Catalyzes the decarboxylation of orotidine 5'-monophosphate (OMP) to uridine 5'-monophosphate (UMP). This chain is Orotidine 5'-phosphate decarboxylase, found in Pseudomonas aeruginosa (strain LESB58).